Here is a 148-residue protein sequence, read N- to C-terminus: FAD synthase (148 aa).

ATP-binding positions include 14–15 (TF), 19–22 (HPGH), and D97.

The protein belongs to the archaeal FAD synthase family. As to quaternary structure, homodimer. A divalent metal cation serves as cofactor.

It carries out the reaction FMN + ATP + H(+) = FAD + diphosphate. The protein operates within cofactor biosynthesis; FAD biosynthesis; FAD from FMN: step 1/1. Catalyzes the transfer of the AMP portion of ATP to flavin mononucleotide (FMN) to produce flavin adenine dinucleotide (FAD) coenzyme. The protein is FAD synthase of Natrialba magadii (strain ATCC 43099 / DSM 3394 / CCM 3739 / CIP 104546 / IAM 13178 / JCM 8861 / NBRC 102185 / NCIMB 2190 / MS3) (Natronobacterium magadii).